Consider the following 234-residue polypeptide: Small ribosomal subunit protein eS4 (234 aa).

The S4 RNA-binding domain maps to Met39–Met102.

The protein belongs to the eukaryotic ribosomal protein eS4 family.

This is Small ribosomal subunit protein eS4 from Methanocella arvoryzae (strain DSM 22066 / NBRC 105507 / MRE50).